Here is a 334-residue protein sequence, read N- to C-terminus: Ferredoxin--NADP reductase (334 aa).

Asp-32, Gln-40, Tyr-45, Val-85, Phe-120, Asp-287, and Thr-327 together coordinate FAD.

Belongs to the ferredoxin--NADP reductase type 2 family. In terms of assembly, homodimer. FAD serves as cofactor.

It carries out the reaction 2 reduced [2Fe-2S]-[ferredoxin] + NADP(+) + H(+) = 2 oxidized [2Fe-2S]-[ferredoxin] + NADPH. The polypeptide is Ferredoxin--NADP reductase (Wolbachia pipientis subsp. Culex pipiens (strain wPip)).